The following is a 447-amino-acid chain: Phosphoglucosamine mutase (447 aa).

Serine 102 serves as the catalytic Phosphoserine intermediate. The Mg(2+) site is built by serine 102, aspartate 241, aspartate 243, and aspartate 245. A Phosphoserine modification is found at serine 102.

Belongs to the phosphohexose mutase family. It depends on Mg(2+) as a cofactor. Post-translationally, activated by phosphorylation.

It carries out the reaction alpha-D-glucosamine 1-phosphate = D-glucosamine 6-phosphate. Functionally, catalyzes the conversion of glucosamine-6-phosphate to glucosamine-1-phosphate. The polypeptide is Phosphoglucosamine mutase (Ruegeria sp. (strain TM1040) (Silicibacter sp.)).